A 91-amino-acid polypeptide reads, in one-letter code: Large ribosomal subunit protein uL23 (91 aa).

This sequence belongs to the universal ribosomal protein uL23 family. In terms of assembly, part of the 50S ribosomal subunit. Contacts protein L29.

Functionally, binds to 23S rRNA. One of the proteins that surrounds the polypeptide exit tunnel on the outside of the ribosome. This is Large ribosomal subunit protein uL23 from Staphylothermus marinus (strain ATCC 43588 / DSM 3639 / JCM 9404 / F1).